The following is a 332-amino-acid chain: 2,3-diketo-L-gulonate reductase (332 aa).

The active-site Proton donor is the His44. Residues 168–174 (ITMVDMS), 224–225 (WK), and 304–306 (GHE) contribute to the NAD(+) site.

Belongs to the LDH2/MDH2 oxidoreductase family. DlgD subfamily. As to quaternary structure, homodimer.

The protein localises to the cytoplasm. It catalyses the reaction 3-dehydro-L-gulonate + NAD(+) = 2,3-dioxo-L-gulonate + NADH + H(+). It carries out the reaction 3-dehydro-L-gulonate + NADP(+) = 2,3-dioxo-L-gulonate + NADPH + H(+). In terms of biological role, catalyzes the reduction of 2,3-diketo-L-gulonate in the presence of NADH, to form 3-keto-L-gulonate. This is 2,3-diketo-L-gulonate reductase from Salmonella agona (strain SL483).